The following is a 79-amino-acid chain: Small ribosomal subunit protein bS16 (79 aa).

This sequence belongs to the bacterial ribosomal protein bS16 family.

The protein is Small ribosomal subunit protein bS16 of Nitratidesulfovibrio vulgaris (strain DSM 19637 / Miyazaki F) (Desulfovibrio vulgaris).